Consider the following 353-residue polypeptide: Small ribosomal subunit protein uS2 (353 aa).

The interval aspartate 256–alanine 353 is disordered. Composition is skewed to low complexity over residues alanine 263–proline 311 and glutamate 321–glutamate 339. The span at alanine 340–alanine 353 shows a compositional bias: acidic residues.

This sequence belongs to the universal ribosomal protein uS2 family.

The chain is Small ribosomal subunit protein uS2 from Beutenbergia cavernae (strain ATCC BAA-8 / DSM 12333 / CCUG 43141 / JCM 11478 / NBRC 16432 / NCIMB 13614 / HKI 0122).